Here is a 388-residue protein sequence, read N- to C-terminus: Protein RecA (388 aa).

Residue 79 to 86 (GPESSGKT) coordinates ATP. A disordered region spans residues 347–372 (IDGEEVSEQDTENKKDEPKKEEAVNE). The span at 357–369 (TENKKDEPKKEEA) shows a compositional bias: basic and acidic residues.

The protein belongs to the RecA family.

Its subcellular location is the cytoplasm. Functionally, can catalyze the hydrolysis of ATP in the presence of single-stranded DNA, the ATP-dependent uptake of single-stranded DNA by duplex DNA, and the ATP-dependent hybridization of homologous single-stranded DNAs. It interacts with LexA causing its activation and leading to its autocatalytic cleavage. This chain is Protein RecA, found in Streptococcus pneumoniae (strain CGSP14).